A 122-amino-acid polypeptide reads, in one-letter code: UPF0231 protein VF_2154 (122 aa).

Belongs to the UPF0231 family.

The chain is UPF0231 protein VF_2154 from Aliivibrio fischeri (strain ATCC 700601 / ES114) (Vibrio fischeri).